The following is a 292-amino-acid chain: MKKISTFIITKNESARIARAINSVKNITDEVIVVDNESTDDTVHIAKTLGAQVIVKPWLGYVGQKSFAESMCVNDWVLNIDADEELSQELQDEIEYIFTSHNQDRYLAYQIKLLIMYRGDQKPRMFAPLNKCTRLYNKKFASFANTINSTTHDSVVFNKDVDFTGKIYLLNGIAYHYSGTSIEQLVNKANFYSSEQAKDLVKQGKKLSNFRLATEMIWCFLKAFFIRRYFVFGFDGFVDSIIFAFARFLRLAKLRDLSLKSQNVITSDNYINYCMDFKSLLQQKKRNRYPKK.

It belongs to the glycosyltransferase 2 family. WaaE/KdtX subfamily.

This is an uncharacterized protein from Rickettsia prowazekii (strain Madrid E).